A 102-amino-acid polypeptide reads, in one-letter code: MQKARIRLSGISPKDLDGVCNQVKSIAERTGVNISGPVPLPTKKLVVPTRKSPSGDGTATWDHWEMRVHKRLIDIAADERALRQLMRIQVPKDINIEIVLEG.

This sequence belongs to the universal ribosomal protein uS10 family. In terms of assembly, part of the 30S ribosomal subunit.

Functionally, involved in the binding of tRNA to the ribosomes. In Methanosarcina mazei (strain ATCC BAA-159 / DSM 3647 / Goe1 / Go1 / JCM 11833 / OCM 88) (Methanosarcina frisia), this protein is Small ribosomal subunit protein uS10.